The sequence spans 265 residues: Hydroxyethylthiazole kinase (265 aa).

Substrate is bound at residue Met50. ATP is bound by residues Arg125 and Thr171. Gly198 provides a ligand contact to substrate.

This sequence belongs to the Thz kinase family. It depends on Mg(2+) as a cofactor.

The enzyme catalyses 5-(2-hydroxyethyl)-4-methylthiazole + ATP = 4-methyl-5-(2-phosphooxyethyl)-thiazole + ADP + H(+). It participates in cofactor biosynthesis; thiamine diphosphate biosynthesis; 4-methyl-5-(2-phosphoethyl)-thiazole from 5-(2-hydroxyethyl)-4-methylthiazole: step 1/1. Catalyzes the phosphorylation of the hydroxyl group of 4-methyl-5-beta-hydroxyethylthiazole (THZ). The chain is Hydroxyethylthiazole kinase from Salmonella typhimurium (strain LT2 / SGSC1412 / ATCC 700720).